Consider the following 274-residue polypeptide: Phosphatidylglycerol--prolipoprotein diacylglyceryl transferase (274 aa).

7 helical membrane-spanning segments follow: residues 22-42 (LSVRWYGLMYLFGFAFAMWLA), 61-81 (LLFYGFLGVILGGRVGYVLFY), 96-116 (IWTGGMSFHGGLIGVITAMVW), 125-145 (FFTVADFVAPLIPFGLGVGRI), 177-197 (SQLYQFALEGVVLFIILNLFW), 204-224 (GAISGMFLLFYGLFRFLVEFV), and 238-258 (ISMGQILSTPMIIIGALMIWV). Residue Arg-144 coordinates a 1,2-diacyl-sn-glycero-3-phospho-(1'-sn-glycerol).

Belongs to the Lgt family.

The protein resides in the cell inner membrane. It catalyses the reaction L-cysteinyl-[prolipoprotein] + a 1,2-diacyl-sn-glycero-3-phospho-(1'-sn-glycerol) = an S-1,2-diacyl-sn-glyceryl-L-cysteinyl-[prolipoprotein] + sn-glycerol 1-phosphate + H(+). It functions in the pathway protein modification; lipoprotein biosynthesis (diacylglyceryl transfer). Its function is as follows. Catalyzes the transfer of the diacylglyceryl group from phosphatidylglycerol to the sulfhydryl group of the N-terminal cysteine of a prolipoprotein, the first step in the formation of mature lipoproteins. In Aeromonas hydrophila subsp. hydrophila (strain ATCC 7966 / DSM 30187 / BCRC 13018 / CCUG 14551 / JCM 1027 / KCTC 2358 / NCIMB 9240 / NCTC 8049), this protein is Phosphatidylglycerol--prolipoprotein diacylglyceryl transferase.